The primary structure comprises 554 residues: MFTSSSPEQRKPRQSRQLPGAACEECRRKKLRCDRQQPQCGGSSLERRLEQQMQTALLPGDDILNMLDEPAFTVFPSSEDQLGLPAFNITNSTRGEQCQDEQFLDHFADMKGSEFTGTLTTTSIPELMRADLTLRADYRRGNGRDQLYFDRVHIFTPIIHQRRYLSWSKDAHKNEARVCLQYAMWALAASFSAPFQHLRDALYRDARRMLDLLELSDGAMATHHLEQAQAWILVAIYEFMRMNYQVGWMSAGRSFRLVQLMRLYGIDGANSPTQELPQTSSMEWIETEEKRRTFWMAYSLDRFISMRDGWPLTLNEQVVTTCLPAPEAAFQSGKPASGGFLSETITQEDTGALFSFTECIIIATVCGRSLSHGQKLEVERVYGDVSPDFWQRHQWLDAIVKKRIEILSLRCASATEVVDPLLLFTYMMAQTTVLYLCKLVKSVTWETDKSNPIVQEYEQRSLAAAQEIVNLTHTLKQFNFLKVHPFMPLPLYLCAEFLSMYRSLDASFDAQLQEVQNALRNLQAVNNLARTYLNLLQVKEREGSLRSSSEEIDL.

The segment at 1–21 (MFTSSSPEQRKPRQSRQLPGA) is disordered. A DNA-binding region (zn(2)-C6 fungal-type) is located at residues 23 to 40 (CEECRRKKLRCDRQQPQC).

It localises to the nucleus. Transcription factor; part of the gene cluster that mediates the biosynthesis of azaphilone pigments (MonAzPs), a complex mixture of compounds with a common azaphilone skeleton very widely used as food colorants. Positively regulates the expression of the azaphilone pigments (MonAzPs) gene cluster. In Monascus ruber (Mold), this protein is Pigment biosynthesis transcriptional activator pigB.